The chain runs to 269 residues: HTH-type transcriptional activator ArnR (269 aa).

Residues 1–218 (MTKSLFDVLK…LLRLTNSYTL (218 aa)) lie on the Cytoplasmic side of the membrane. A DNA-binding region (H-T-H motif) is located at residues 39-62 (TTEISQTINTSRKSIIDAIRKLVD). A helical membrane pass occupies residues 219-239 (EMANVKVMGFILISLPLLMYF). Over 240–242 (RDQ) the chain is Extracellular. Residues 243–263 (LGLIELPWLYAVIFLALLSVF) traverse the membrane as a helical segment. Over 264-269 (AQILSR) the chain is Cytoplasmic.

The protein resides in the cell membrane. In terms of biological role, involved in regulation of archaellar gene expression. Activates flaB transcription upon nutrient starvation by acting on the flaB promoter. The protein is HTH-type transcriptional activator ArnR of Sulfolobus acidocaldarius (strain ATCC 33909 / DSM 639 / JCM 8929 / NBRC 15157 / NCIMB 11770).